Consider the following 459-residue polypeptide: UDP-N-acetylmuramoylalanine--D-glutamate ligase (459 aa).

ATP is bound at residue glycine 120–threonine 126.

Belongs to the MurCDEF family.

Its subcellular location is the cytoplasm. The catalysed reaction is UDP-N-acetyl-alpha-D-muramoyl-L-alanine + D-glutamate + ATP = UDP-N-acetyl-alpha-D-muramoyl-L-alanyl-D-glutamate + ADP + phosphate + H(+). Its pathway is cell wall biogenesis; peptidoglycan biosynthesis. Cell wall formation. Catalyzes the addition of glutamate to the nucleotide precursor UDP-N-acetylmuramoyl-L-alanine (UMA). The chain is UDP-N-acetylmuramoylalanine--D-glutamate ligase from Lactobacillus acidophilus (strain ATCC 700396 / NCK56 / N2 / NCFM).